We begin with the raw amino-acid sequence, 470 residues long: Glutamate--tRNA ligase 2 (470 aa).

The 'HIGH' region motif lies at 10–20; that stretch reads PSPTGFLHIGS. Positions 239–243 match the 'KMSKS' region motif; the sequence is KLSKR. Lys-242 contacts ATP.

This sequence belongs to the class-I aminoacyl-tRNA synthetase family. Glutamate--tRNA ligase type 1 subfamily. As to quaternary structure, monomer.

It is found in the cytoplasm. The catalysed reaction is tRNA(Glu) + L-glutamate + ATP = L-glutamyl-tRNA(Glu) + AMP + diphosphate. Functionally, catalyzes the attachment of glutamate to tRNA(Glu) in a two-step reaction: glutamate is first activated by ATP to form Glu-AMP and then transferred to the acceptor end of tRNA(Glu). The protein is Glutamate--tRNA ligase 2 of Rickettsia prowazekii (strain Madrid E).